Reading from the N-terminus, the 438-residue chain is UDP-N-acetylmuramoylalanine--D-glutamate ligase (438 aa).

An ATP-binding site is contributed by 112–118; sequence GSNGKST.

This sequence belongs to the MurCDEF family. Mg(2+) serves as cofactor.

The protein localises to the cytoplasm. The enzyme catalyses UDP-N-acetyl-alpha-D-muramoyl-L-alanine + D-glutamate + ATP = UDP-N-acetyl-alpha-D-muramoyl-L-alanyl-D-glutamate + ADP + phosphate + H(+). It participates in cell wall biogenesis; peptidoglycan biosynthesis. Its function is as follows. Cell wall formation. Catalyzes the addition of glutamate to the nucleotide precursor UDP-N-acetylmuramoyl-L-alanine (UMA). This chain is UDP-N-acetylmuramoylalanine--D-glutamate ligase (murD), found in Escherichia coli (strain K12).